The chain runs to 446 residues: MSASAVGQGRNVVVIGTQWGDEGKGKIVDWLTDHAKGVVRFQGGHNAGHTLIIGGKKTILRLIPSGIMREGTVCYIGNGVVLSPEALFREIEELETAGLEVQKRLRISEAATLILPYHVAIDKAREARRGAAKIGTTGRGIGPAYEDKVARRALRVQDLFDPQQFAERLRENLDFHNFMLTQYLGAEAVDYQQTLDDALAFAPRLAPMVADVSAELYAVNAAGGNLMFEGAQGTLLDVDHGTYPFVTSSNCVAGAAAAGAGVGPGRLSYILGITKAYCTRVGAGPFPSELYDNDNPARQDQVGVRLANVGKEFGSVTGRPRRTGWLDAAALKRSVQINGVSGLCLTKLDVLDGLESIKLCVGYTLDGKTVDILPRGSDAVARCEPVYEEFPGWNESTFGVKAWDALPEAARVYLKRVEEVVGIPIDMISTGPDRDETILLRHPYLA.

Residues 20 to 26 (GDEGKGK) and 48 to 50 (GHT) each bind GTP. D21 serves as the catalytic Proton acceptor. The Mg(2+) site is built by D21 and G48. Residues 21-24 (DEGK), 46-49 (NAGH), T137, R151, Q232, T247, and R319 each bind IMP. H49 serves as the catalytic Proton donor. Position 315–321 (315–321 (SVTGRPR)) interacts with substrate. Residues R321, 347-349 (KLD), and 429-431 (STG) each bind GTP.

The protein belongs to the adenylosuccinate synthetase family. As to quaternary structure, homodimer. Requires Mg(2+) as cofactor.

It is found in the cytoplasm. The catalysed reaction is IMP + L-aspartate + GTP = N(6)-(1,2-dicarboxyethyl)-AMP + GDP + phosphate + 2 H(+). Its pathway is purine metabolism; AMP biosynthesis via de novo pathway; AMP from IMP: step 1/2. Its function is as follows. Plays an important role in the de novo pathway of purine nucleotide biosynthesis. Catalyzes the first committed step in the biosynthesis of AMP from IMP. The chain is Adenylosuccinate synthetase 1 from Cupriavidus pinatubonensis (strain JMP 134 / LMG 1197) (Cupriavidus necator (strain JMP 134)).